We begin with the raw amino-acid sequence, 597 residues long: Probable tyrosine-protein phosphatase (597 aa).

A compositionally biased stretch (low complexity) spans valine 55–alanine 81. 3 disordered regions span residues valine 55–tyrosine 89, serine 107–leucine 172, and serine 188–asparagine 228. Polar residues predominate over residues serine 107 to leucine 126. The span at threonine 136–serine 151 shows a compositional bias: low complexity. Composition is skewed to polar residues over residues serine 188–arginine 206 and lysine 216–asparagine 228. The Tyrosine-protein phosphatase domain maps to glycine 428–asparagine 579. Cysteine 516 (phosphocysteine intermediate) is an active-site residue.

This sequence belongs to the protein-tyrosine phosphatase family. Non-receptor class dual specificity subfamily.

It catalyses the reaction O-phospho-L-tyrosyl-[protein] + H2O = L-tyrosyl-[protein] + phosphate. The chain is Probable tyrosine-protein phosphatase (CPP1) from Candida albicans (strain WO-1) (Yeast).